The following is a 472-amino-acid chain: 3-isopropylmalate dehydratase large subunit (472 aa).

3 residues coordinate [4Fe-4S] cluster: Cys352, Cys413, and Cys416.

This sequence belongs to the aconitase/IPM isomerase family. LeuC type 1 subfamily. Heterodimer of LeuC and LeuD. [4Fe-4S] cluster is required as a cofactor.

It carries out the reaction (2R,3S)-3-isopropylmalate = (2S)-2-isopropylmalate. It functions in the pathway amino-acid biosynthesis; L-leucine biosynthesis; L-leucine from 3-methyl-2-oxobutanoate: step 2/4. Functionally, catalyzes the isomerization between 2-isopropylmalate and 3-isopropylmalate, via the formation of 2-isopropylmaleate. The polypeptide is 3-isopropylmalate dehydratase large subunit (Laribacter hongkongensis (strain HLHK9)).